Consider the following 199-residue polypeptide: Small ribosomal subunit protein eS1 (199 aa).

This sequence belongs to the eukaryotic ribosomal protein eS1 family.

The protein is Small ribosomal subunit protein eS1 of Pyrococcus horikoshii (strain ATCC 700860 / DSM 12428 / JCM 9974 / NBRC 100139 / OT-3).